We begin with the raw amino-acid sequence, 225 residues long: Probable 3-keto-L-gulonate-6-phosphate decarboxylase (225 aa).

Position 11 (D11) interacts with substrate. Mg(2+)-binding residues include E33 and D62. R202 lines the substrate pocket.

It belongs to the HPS/KGPDC family. KGPDC subfamily. As to quaternary structure, homodimer. It depends on Mg(2+) as a cofactor.

The enzyme catalyses 3-dehydro-L-gulonate 6-phosphate + H(+) = L-xylulose 5-phosphate + CO2. Its function is as follows. Catalyzes the decarboxylation of 3-keto-L-gulonate-6-P into L-xylulose-5-P. The chain is Probable 3-keto-L-gulonate-6-phosphate decarboxylase (sgbH) from Haemophilus influenzae (strain ATCC 51907 / DSM 11121 / KW20 / Rd).